A 309-amino-acid polypeptide reads, in one-letter code: Protease HtpX homolog (309 aa).

A run of 2 helical transmembrane segments spans residues 7-27 (TTVLLAAMTALMMIIGQMLGG) and 29-49 (QGMMIALIFAGVMNFASYWYS). Residue His-131 participates in Zn(2+) binding. Residue Glu-132 is part of the active site. His-135 serves as a coordination point for Zn(2+). 2 consecutive transmembrane segments (helical) span residues 141 to 161 (ILIGTIAATMAGAIMMLASMA) and 182 to 202 (IGLIALSIIAPMAAMVIQMAI). Glu-207 is a binding site for Zn(2+). The segment at 278–309 (RHGSDSGTGNRDSSIRRRNMNTEAKAAWDRLR) is disordered.

The protein belongs to the peptidase M48B family. The cofactor is Zn(2+).

It localises to the cell inner membrane. The polypeptide is Protease HtpX homolog (Desulforapulum autotrophicum (strain ATCC 43914 / DSM 3382 / VKM B-1955 / HRM2) (Desulfobacterium autotrophicum)).